Reading from the N-terminus, the 255-residue chain is Pimeloyl-[acyl-carrier protein] methyl ester esterase (255 aa).

The AB hydrolase-1 domain occupies Leu16 to Pro242. Residues Trp22, Ser82–Leu83, and Phe143–Gln147 contribute to the substrate site. Ser82 serves as the catalytic Nucleophile. Residues Asp207 and His235 contribute to the active site. His235 lines the substrate pocket.

The protein belongs to the AB hydrolase superfamily. Carboxylesterase BioH family. As to quaternary structure, monomer.

The protein resides in the cytoplasm. It catalyses the reaction 6-carboxyhexanoyl-[ACP] methyl ester + H2O = 6-carboxyhexanoyl-[ACP] + methanol + H(+). Its pathway is cofactor biosynthesis; biotin biosynthesis. In terms of biological role, the physiological role of BioH is to remove the methyl group introduced by BioC when the pimeloyl moiety is complete. It allows to synthesize pimeloyl-ACP via the fatty acid synthetic pathway through the hydrolysis of the ester bonds of pimeloyl-ACP esters. This Vibrio vulnificus (strain CMCP6) protein is Pimeloyl-[acyl-carrier protein] methyl ester esterase.